A 1584-amino-acid chain; its full sequence is Adhesion G protein-coupled receptor B1 (1584 aa).

A signal peptide spans Met1–Ala30. At Ala31 to Ser948 the chain is on the extracellular side. Asn64 carries N-linked (GlcNAc...) asparagine glycosylation. The segment at Arg146 to Asp167 is disordered. The region spanning Thr261–Gly315 is the TSP type-1 1 domain. 3 disulfides stabilise this stretch: Cys273–Cys309, Cys277–Cys314, and Cys288–Cys299. A disordered region spans residues Ala313 to Arg335. The span at Arg319–Ser329 shows a compositional bias: low complexity. TSP type-1 domains are found at residues Asp354–Pro407, His409–Pro462, Asp467–Pro520, and Asp522–Pro575. Cystine bridges form between Cys366–Cys400, Cys370–Cys406, Cys381–Cys390, Cys421–Cys456, Cys425–Cys461, Cys436–Cys446, Cys479–Cys514, Cys483–Cys519, Cys494–Cys504, Cys534–Cys569, Cys538–Cys574, Cys549–Cys559, Cys581–Cys616, and Cys604–Cys634. Asn401 carries N-linked (GlcNAc...) asparagine glycosylation. Residue Asn607 is glycosylated (N-linked (GlcNAc...) asparagine). Residue Thr609 is modified to Phosphothreonine. Residues Asn692, Asn844, Asn877, and Asn881 are each glycosylated (N-linked (GlcNAc...) asparagine). One can recognise a GAIN-B domain in the interval Arg760–Ala939. Cystine bridges form between Cys884–Cys921 and Cys909–Cys923. Residues Cys884–Ala939 form a GPS region. Positions Ser927–Lys943 are N-terminal stalk following vasculostatin-120 cleavage which is not required for signaling activity. The helical transmembrane segment at Val949–Tyr969 threads the bilayer. Residues Val970–Arg980 lie on the Cytoplasmic side of the membrane. The helical transmembrane segment at Ser981–Gly1001 threads the bilayer. The Extracellular segment spans residues Gln1002–Lys1008. Residues Val1009–Val1029 traverse the membrane as a helical segment. At Leu1030–Arg1052 the chain is on the cytoplasmic side. A helical membrane pass occupies residues Phe1053 to Lys1073. Residues Ala1074–Tyr1093 lie on the Extracellular side of the membrane. A helical transmembrane segment spans residues Ala1094 to Phe1114. Topologically, residues Asn1115–Leu1136 are cytoplasmic. A helical transmembrane segment spans residues Trp1137–Val1157. At Thr1158–Gln1166 the chain is on the extracellular side. Residues Ile1167–Leu1187 form a helical membrane-spanning segment. The Cytoplasmic segment spans residues Arg1188–Val1584. The interval Tyr1365–Val1584 is involved in interaction with MAGI1. 2 disordered regions span residues Glu1385–Ser1475 and Arg1501–Leu1548. Over residues Arg1391 to Leu1439 the composition is skewed to pro residues. Residues Thr1453 to Ser1469 show a composition bias toward polar residues. Phosphoserine is present on Ser1469. A compositionally biased stretch (basic and acidic residues) spans Arg1501–Lys1522. The tract at residues Gln1581–Val1584 is indispensable for interaction with MAGI1.

The protein belongs to the G-protein coupled receptor 2 family. LN-TM7 subfamily. As to quaternary structure, interacts with ELMO1 and DOCK. When bound to ELMO1 and DOCK1, acts as a module to promote apoptotic cell engulfment. Interacts with MDM2; the interaction results in inhibition of MDM2-mediated ubiquitination and degradation of DLG4/PSD95. Interacts with PARD3 and TIAM1; the interaction is required for correct dendritic. localization of PARD3 and TIAM1 and for dendritic spine formation. Interacts with MAGI1. Interacts with MAGI3. Interacts with BAIAP2. Interacts with PHYHIP. Interacts with DLG4 (via PDZ domain). Vasculostatin-120: Interacts with CD36. Vasculostatin-120: Interacts with ARRB2. Interacts with BAIAP3; this interaction is direct. In terms of processing, proteolytically cleaved to produce vasculostatin-40 and vasculostatin-120. Vasculostatin-40 is the major form and is produced through proteolytic cleavage by MMP14 between residues 321 and 329 with cleavage likely to be between Ser-326 and Leu-327. Post-translationally, ubiquitinated. As to expression, expressed in brain (at protein level). Expressed on mononuclear phagocytes and monocyte-derived macrophages in the gastric mucosa (at protein level). Expressed in normal pancreatic tissue but not in pancreatic tumor tissue. Reduced or no expression is observed in some glioblastomas.

It is found in the cell membrane. Its subcellular location is the cell projection. The protein localises to the phagocytic cup. It localises to the cell junction. The protein resides in the focal adhesion. It is found in the dendritic spine. Its subcellular location is the postsynaptic density. The protein localises to the secreted. Its function is as follows. Phosphatidylserine receptor which enhances the engulfment of apoptotic cells. Also mediates the binding and engulfment of Gram-negative bacteria. Stimulates production of reactive oxygen species by macrophages in response to Gram-negative bacteria, resulting in enhanced microbicidal macrophage activity. In the gastric mucosa, required for recognition and engulfment of apoptotic gastric epithelial cells. Promotes myoblast fusion. Activates the Rho pathway in a G-protein-dependent manner. Inhibits MDM2-mediated ubiquitination and degradation of DLG4/PSD95, promoting DLG4 stability and regulating synaptic plasticity. Required for the formation of dendritic spines by ensuring the correct localization of PARD3 and TIAM1. Potent inhibitor of angiogenesis in brain and may play a significant role as a mediator of the p53/TP53 signal in suppression of glioblastoma. In terms of biological role, inhibits angiogenesis in a CD36-dependent manner. Inhibits angiogenesis. The sequence is that of Adhesion G protein-coupled receptor B1 from Homo sapiens (Human).